We begin with the raw amino-acid sequence, 208 residues long: Ribonuclease HII (208 aa).

An RNase H type-2 domain is found at 5-198; that stretch reads PLIAGVDEVG…CQPRLEHDCR (194 aa). A divalent metal cation-binding residues include D11, E12, and D106.

The protein belongs to the RNase HII family. It depends on Mn(2+) as a cofactor. Mg(2+) serves as cofactor.

It localises to the cytoplasm. The catalysed reaction is Endonucleolytic cleavage to 5'-phosphomonoester.. Functionally, endonuclease that specifically degrades the RNA of RNA-DNA hybrids. The protein is Ribonuclease HII of Microcystis aeruginosa (strain NIES-843 / IAM M-2473).